Reading from the N-terminus, the 108-residue chain is Dormancy-associated protein homolog 1 (108 aa).

Residues 28 to 59 (DIKGVGEGSSSKTVAAVAGSPGTPTTPGSARK) are disordered. Ser-47 carries the phosphoserine modification. At Thr-50 the chain carries Phosphothreonine.

This sequence belongs to the DRM1/ARP family. As to expression, expressed mainly in the low bolt.

The protein is Dormancy-associated protein homolog 1 of Arabidopsis thaliana (Mouse-ear cress).